A 375-amino-acid chain; its full sequence is MTPILFVDRDGTLITEPADFQIDAYEKLRFVEGVIPAMLKLRDAGYQFVIVSNQDGLGSESYPQASFDGPNNLMLQIFASQGIVFREVLIDCSWPADNAPTRKPGVGLMVPYLQDRTIDWSRSAMVGDRITDIQFAQNLNIRGFQLRTEQFGGDWDWAGIAHELADAPRRAVVQRNTKETRIRVELDLDRVAEPHTATGLPFFDHMLEQIGKHGGFALDIRAEGDLHIDEHHTIEDTGLALGQALREALGDKRGIGRYGFDPVDSPWRVAGDTAQHGFTLPMDETIASAALDFSGRPYFVFDGDFKRERVGDMPTELVPHFFRSVCDASGLNLHLHVRGENDHHKVEGCFKALARALRQAIRREGTALPSTKGAL.

Positions 1–168 (MTPILFVDRD…GIAHELADAP (168 aa)) are histidinol-phosphatase. The Nucleophile role is filled by Asp-8. Mg(2+) is bound by residues Asp-8, Asp-10, and Asp-128. Asp-10 functions as the Proton donor in the catalytic mechanism. Residues 169–375 (RRAVVQRNTK…TALPSTKGAL (207 aa)) form an imidazoleglycerol-phosphate dehydratase region.

This sequence in the N-terminal section; belongs to the histidinol-phosphatase family. The protein in the C-terminal section; belongs to the imidazoleglycerol-phosphate dehydratase family. Mg(2+) serves as cofactor.

Its subcellular location is the cytoplasm. The enzyme catalyses D-erythro-1-(imidazol-4-yl)glycerol 3-phosphate = 3-(imidazol-4-yl)-2-oxopropyl phosphate + H2O. The catalysed reaction is L-histidinol phosphate + H2O = L-histidinol + phosphate. The protein operates within amino-acid biosynthesis; L-histidine biosynthesis; L-histidine from 5-phospho-alpha-D-ribose 1-diphosphate: step 6/9. Its pathway is amino-acid biosynthesis; L-histidine biosynthesis; L-histidine from 5-phospho-alpha-D-ribose 1-diphosphate: step 8/9. The chain is Histidine biosynthesis bifunctional protein HisB from Xanthomonas campestris pv. campestris (strain B100).